The primary structure comprises 765 residues: SNF-related serine/threonine-protein kinase (765 aa).

One can recognise a Protein kinase domain in the interval 16–269 (YDLDKTLGRG…LEEIENHPWL (254 aa)). Residues 22–30 (LGRGHFAVV) and K45 contribute to the ATP site. The active-site Proton acceptor is D139. Phosphoserine is present on S162. T173 carries the phosphothreonine; by LKB1 modification. Residues 291–334 (SEEEHNSIIQRMVLGDIADRDAIVEALETNRYNHITATYFLLAE) enclose the UBA domain. 5 positions are modified to phosphoserine: S362, S390, S482, S495, and S518. Residues 512-634 (LKMNIASPGT…RCAGPSNSMQ (123 aa)) form a disordered region. A compositionally biased stretch (basic residues) spans 522–532 (VHKRYHRRKSQ). The span at 533-542 (GRGSSCSSSE) shows a compositional bias: low complexity. The residue at position 534 (R534) is an Omega-N-methylarginine. A compositionally biased stretch (basic and acidic residues) spans 549–558 (ESRRRLDKDS). Residues 603–614 (AGGGSPSSGSGG) are compositionally biased toward gly residues. A Phosphoserine modification is found at S607.

It belongs to the protein kinase superfamily. CAMK Ser/Thr protein kinase family. It depends on Mg(2+) as a cofactor. Post-translationally, autophosphorylated. Phosphorylation on Thr-173 by STK11/LKB1 in complex with STE20-related adapter-alpha (STRADA) pseudo kinase and CAB39. As to expression, expressed in hematopoietic progenitor cells and leukemic cell lines. Weakly expressed in the testis.

The protein localises to the nucleus. The catalysed reaction is L-seryl-[protein] + ATP = O-phospho-L-seryl-[protein] + ADP + H(+). It catalyses the reaction L-threonyl-[protein] + ATP = O-phospho-L-threonyl-[protein] + ADP + H(+). Its activity is regulated as follows. Activated by phosphorylation on Thr-173. May play a role in hematopoietic cell proliferation or differentiation. Potential mediator of neuronal apoptosis. This Homo sapiens (Human) protein is SNF-related serine/threonine-protein kinase.